The primary structure comprises 458 residues: A-type ATP synthase subunit B (458 aa).

The protein belongs to the ATPase alpha/beta chains family. Has multiple subunits with at least A(3), B(3), C, D, E, F, H, I and proteolipid K(x).

The protein resides in the cell membrane. Its function is as follows. Component of the A-type ATP synthase that produces ATP from ADP in the presence of a proton gradient across the membrane. The B chain is a regulatory subunit. This chain is A-type ATP synthase subunit B, found in Methanocella arvoryzae (strain DSM 22066 / NBRC 105507 / MRE50).